Reading from the N-terminus, the 392-residue chain is Succinate--CoA ligase [ADP-forming] subunit beta (392 aa).

Residues 9-248 enclose the ATP-grasp domain; the sequence is KEILRGFGVT…TSEEDPLEVE (240 aa). ATP contacts are provided by residues K50, 57–59, E103, M106, and E111; that span reads GRG. N203 and D217 together coordinate Mg(2+). Substrate-binding positions include N268 and 325–327; that span reads GIV.

Belongs to the succinate/malate CoA ligase beta subunit family. Heterotetramer of two alpha and two beta subunits. Mg(2+) is required as a cofactor.

It carries out the reaction succinate + ATP + CoA = succinyl-CoA + ADP + phosphate. The enzyme catalyses GTP + succinate + CoA = succinyl-CoA + GDP + phosphate. The protein operates within carbohydrate metabolism; tricarboxylic acid cycle; succinate from succinyl-CoA (ligase route): step 1/1. Its function is as follows. Succinyl-CoA synthetase functions in the citric acid cycle (TCA), coupling the hydrolysis of succinyl-CoA to the synthesis of either ATP or GTP and thus represents the only step of substrate-level phosphorylation in the TCA. The beta subunit provides nucleotide specificity of the enzyme and binds the substrate succinate, while the binding sites for coenzyme A and phosphate are found in the alpha subunit. This is Succinate--CoA ligase [ADP-forming] subunit beta from Chloroherpeton thalassium (strain ATCC 35110 / GB-78).